The chain runs to 430 residues: Glutamate-1-semialdehyde 2,1-aminomutase (430 aa).

At Lys267 the chain carries N6-(pyridoxal phosphate)lysine.

This sequence belongs to the class-III pyridoxal-phosphate-dependent aminotransferase family. HemL subfamily. As to quaternary structure, homodimer. Pyridoxal 5'-phosphate is required as a cofactor.

Its subcellular location is the cytoplasm. It carries out the reaction (S)-4-amino-5-oxopentanoate = 5-aminolevulinate. The protein operates within porphyrin-containing compound metabolism; protoporphyrin-IX biosynthesis; 5-aminolevulinate from L-glutamyl-tRNA(Glu): step 2/2. The protein is Glutamate-1-semialdehyde 2,1-aminomutase of Sulfurovum sp. (strain NBC37-1).